The following is a 375-amino-acid chain: Carboxypeptidase O (375 aa).

Positions 1-20 (MKPLLGTFYLLGMLVPGWLG) are cleaved as a signal peptide. Residues 50-345 (RYHPMGEIYQ…EAVLSVLDDV (296 aa)) enclose the Peptidase M14 domain. His109 and Glu112 together coordinate Zn(2+). N-linked (GlcNAc...) asparagine glycosylation is present at Asn175. His237 is a Zn(2+) binding site. An N-linked (GlcNAc...) asparagine glycan is attached at Asn252. Catalysis depends on Glu311, which acts as the Proton donor/acceptor. Asn315 is a glycosylation site (N-linked (GlcNAc...) asparagine). Residue Ser354 is the site of GPI-anchor amidated serine attachment. A propeptide spans 355–375 (ARKAKSTALVLGLLMSFMSLL) (removed in mature form).

Belongs to the peptidase M14 family. Requires Zn(2+) as cofactor.

The protein localises to the apical cell membrane. Its function is as follows. Carboxypeptidase which preferentially cleaves C-terminal acidic residues from peptides and proteins. Can also cleave C-terminal hydrophobic amino acids, with a preference for small residues over large residues. This is Carboxypeptidase O from Bos taurus (Bovine).